The chain runs to 212 residues: Uridine kinase (212 aa).

13–20 (GGSGSGKT) is a binding site for ATP.

Belongs to the uridine kinase family.

The protein localises to the cytoplasm. It carries out the reaction uridine + ATP = UMP + ADP + H(+). The enzyme catalyses cytidine + ATP = CMP + ADP + H(+). It participates in pyrimidine metabolism; CTP biosynthesis via salvage pathway; CTP from cytidine: step 1/3. It functions in the pathway pyrimidine metabolism; UMP biosynthesis via salvage pathway; UMP from uridine: step 1/1. The sequence is that of Uridine kinase from Bacillus anthracis (strain A0248).